Consider the following 806-residue polypeptide: Ankyrin repeat, bromo and BTB domain-containing protein DDB_G0293800 (806 aa).

ANK repeat units lie at residues 1–30, 34–63, 67–96, 100–130, and 134–163; these read MSNK…DVNQ, SNRY…LVNC, RGAT…DVNC, AGST…DVNL, and EGST…RADV. The span at 210–228 shows a compositional bias: basic and acidic residues; the sequence is GVGKKEDDDNNMKIDKQES. The disordered stretch occupies residues 210-231; the sequence is GVGKKEDDDNNMKIDKQESEQQ. The BTB domain maps to 239-307; that stretch reads SDITFLIENQ…IYTGSIEKFE (69 aa). 2 disordered regions span residues 423 to 517 and 621 to 743; these read TRTA…SDSM and QNFP…EERR. 2 stretches are compositionally biased toward low complexity: residues 426–436 and 443–511; these read ANANASNSNQS and TSTT…SSSS. A Bromo domain is found at 516–622; that stretch reads SMNEKNLTFC…NAFDQKFLQN (107 aa). Residues 626-641 show a composition bias toward pro residues; sequence EKPPTYKPPPPTPTPI. Residues 642-658 show a composition bias toward low complexity; sequence PTQQQQQQSTSSTSTPT. A compositionally biased stretch (basic and acidic residues) spans 666-675; it reads DEHVKVKEDT. The span at 676–693 shows a compositional bias: polar residues; that stretch reads NSAQPTSSSSNHTNGENA. Residues 694–733 are compositionally biased toward low complexity; it reads SSSSSSSSSKQSNNNNNNNNNNNSNSTTNSSSSSSSTTTT. In terms of domain architecture, NET spans 727–806; sequence SSSTTTTQKK…ECFKKQKQDE (80 aa).

The chain is Ankyrin repeat, bromo and BTB domain-containing protein DDB_G0293800 from Dictyostelium discoideum (Social amoeba).